A 526-amino-acid chain; its full sequence is Microphthalmia-associated transcription factor (526 aa).

The tract at residues 1–54 (MQSESGIVPDFEVGEEFHEEPKTYYELKSQPLKSSSSAEHPGASKPPISSSSMT) is disordered. Ser5 bears the Phosphoserine; by MTOR mark. Residues 15 to 25 (EEFHEEPKTYY) show a composition bias toward basic and acidic residues. Residues 41–54 (PGASKPPISSSSMT) are compositionally biased toward low complexity. Ser180 is subject to Phosphoserine; by MAPK. The interval 224–295 (DDVIDDIISL…PNIKRELTAC (72 aa)) is transactivation. The residue at position 280 (Ser280) is a Phosphoserine; by MARK3. A Glycyl lysine isopeptide (Lys-Gly) (interchain with G-Cter in SUMO) cross-link involves residue Lys289. Positions 311–364 (QKKDNHNLIERRRRFNINDRIKELGTLIPKSNDPDMRWNKGTILKASVDYIRKL) constitute a bHLH domain. Residues 355-402 (KASVDYIRKLQREQQRAKELENRQKKLEHANRHLLLRIQELEMQARAH) adopt a coiled-coil conformation. The tract at residues 374 to 395 (LENRQKKLEHANRHLLLRIQEL) is leucine-zipper. Residues 401 to 431 (AHGLSLIPSTGLCSPDLVNRIIKQEPVLENC) are DNA-binding regulation. Residue Ser405 is modified to Phosphoserine; by GSK3. Ser414 carries the post-translational modification Phosphoserine. Lys423 is covalently cross-linked (Glycyl lysine isopeptide (Lys-Gly) (interchain with G-Cter in SUMO)). Position 491 is a phosphoserine (Ser491). A disordered region spans residues 496 to 526 (TDPLLSSVSPGASKTSSRRSSMSMEETEHTC). The segment covering 499–509 (LLSSVSPGASK) has biased composition (polar residues). Ser516 bears the Phosphoserine; by RPS6KA1 mark.

Belongs to the MiT/TFE family. Homodimer or heterodimer; dimerization is mediated via the coiled coil region. Efficient DNA binding requires dimerization with another bHLH protein. Binds DNA in the form of homodimer or heterodimer with either TFE3, TFEB or TFEC. Interacts with small GTPases Rag (RagA/RRAGA, RagB/RRAGB, RagC/RRAGC and/or RagD/RRAGD); promoting its recruitment to lysosomal membrane in the presence of nutrients. Interacts with KARS1. Identified in a complex with HINT1 and CTNNB1. Interacts with VSX2. In terms of processing, when nutrients are present, phosphorylation by MTOR at Ser-5 via non-canonical mTORC1 pathway promotes ubiquitination by the SCF(BTRC) complex, followed by degradation. Phosphorylation at Ser-405 significantly enhances the ability to bind the tyrosinase promoter. Phosphorylation by MARK3/cTAK1 at Ser-280 promotes association with 14-3-3/YWHA adapters and retention in the cytosol. Phosphorylated at Ser-180 and Ser-516 following KIT signaling, triggering a short live activation: Phosphorylation at Ser-180 and Ser-516 by MAPK and RPS6KA1, respectively, activate the transcription factor activity but also promote ubiquitination and subsequent degradation by the proteasome. Phosphorylated in response to blue light (415nm). Post-translationally, ubiquitinated by the SCF(BTRC) and SCF(FBXW11) complexes following phosphorylation ar Ser-5 by MTOR, leading to its degradation by the proteasome. Ubiquitinated following phosphorylation at Ser-180, leading to subsequent degradation by the proteasome. Deubiquitinated by USP13, preventing its degradation. Expressed in melanocytes (at protein level). In terms of tissue distribution, expressed in the retinal pigment epithelium, brain, and placenta. Expressed in the kidney. As to expression, expressed in the kidney and retinal pigment epithelium. Expressed in the kidney. In terms of tissue distribution, expressed in melanocytes.

The protein localises to the nucleus. It localises to the cytoplasm. It is found in the lysosome membrane. Transcription factor that acts as a master regulator of melanocyte survival and differentiation as well as melanosome biogenesis. Binds to M-boxes (5'-TCATGTG-3') and symmetrical DNA sequences (E-boxes) (5'-CACGTG-3') found in the promoter of pigmentation genes, such as tyrosinase (TYR). Involved in the cellular response to amino acid availability by acting downstream of MTOR: in the presence of nutrients, MITF phosphorylation by MTOR promotes its inactivation. Upon starvation or lysosomal stress, inhibition of MTOR induces MITF dephosphorylation, resulting in transcription factor activity. Plays an important role in melanocyte development by regulating the expression of tyrosinase (TYR) and tyrosinase-related protein 1 (TYRP1). Plays a critical role in the differentiation of various cell types, such as neural crest-derived melanocytes, mast cells, osteoclasts and optic cup-derived retinal pigment epithelium. The sequence is that of Microphthalmia-associated transcription factor from Homo sapiens (Human).